Reading from the N-terminus, the 110-residue chain is T cell receptor alpha variable 35 (110 aa).

Positions 1–19 (MLLEHLLIILWMQLTWVSG) are cleaved as a signal peptide. Residues 20–110 (QQLNQSPQSM…DVGIYFCAGQ (91 aa)) enclose the Ig-like domain. N-linked (GlcNAc...) asparagine glycosylation is found at asparagine 40 and asparagine 93. Cysteine 41 and cysteine 107 form a disulfide bridge.

In terms of assembly, alpha-beta TR is a heterodimer composed of an alpha and beta chain; disulfide-linked. The alpha-beta TR is associated with the transmembrane signaling CD3 coreceptor proteins to form the TR-CD3 (TcR or TCR). The assembly of alpha-beta TR heterodimers with CD3 occurs in the endoplasmic reticulum where a single alpha-beta TR heterodimer associates with one CD3D-CD3E heterodimer, one CD3G-CD3E heterodimer and one CD247 homodimer forming a stable octameric structure. CD3D-CD3E and CD3G-CD3E heterodimers preferentially associate with TR alpha and TR beta chains, respectively. The association of the CD247 homodimer is the last step of TcR assembly in the endoplasmic reticulum and is required for transport to the cell surface.

It is found in the cell membrane. Functionally, v region of the variable domain of T cell receptor (TR) alpha chain that participates in the antigen recognition. Alpha-beta T cell receptors are antigen specific receptors which are essential to the immune response and are present on the cell surface of T lymphocytes. Recognize peptide-major histocompatibility (MH) (pMH) complexes that are displayed by antigen presenting cells (APC), a prerequisite for efficient T cell adaptive immunity against pathogens. Binding of alpha-beta TR to pMH complex initiates TR-CD3 clustering on the cell surface and intracellular activation of LCK that phosphorylates the ITAM motifs of CD3G, CD3D, CD3E and CD247 enabling the recruitment of ZAP70. In turn ZAP70 phosphorylates LAT, which recruits numerous signaling molecules to form the LAT signalosome. The LAT signalosome propagates signal branching to three major signaling pathways, the calcium, the mitogen-activated protein kinase (MAPK) kinase and the nuclear factor NF-kappa-B (NF-kB) pathways, leading to the mobilization of transcription factors that are critical for gene expression and essential for T cell growth and differentiation. The T cell repertoire is generated in the thymus, by V-(D)-J rearrangement. This repertoire is then shaped by intrathymic selection events to generate a peripheral T cell pool of self-MH restricted, non-autoaggressive T cells. Post-thymic interaction of alpha-beta TR with the pMH complexes shapes TR structural and functional avidity. In Homo sapiens (Human), this protein is T cell receptor alpha variable 35.